Reading from the N-terminus, the 140-residue chain is Large ribosomal subunit protein uL14 (140 aa).

It belongs to the universal ribosomal protein uL14 family.

The chain is Large ribosomal subunit protein uL14 (RpL23) from Drosophila melanogaster (Fruit fly).